Reading from the N-terminus, the 245-residue chain is DNA polymerase III subunit epsilon (245 aa).

The a divalent metal cation site is built by D11 and E13. Substrate is bound by residues D11, E13, Q60, and H65. H161 (proton acceptor) is an active-site residue. D166 contributes to the a divalent metal cation binding site. Position 166 (D166) interacts with substrate.

As to quaternary structure, the DNA polymerase holoenzyme is a complex that contains 10 different types of subunits. These subunits are organized into 3 functionally essential subassemblies: the pol III core, the beta sliding clamp processivity factor and the clamp-loading complex. The pol III core (subunits alpha,epsilon and theta) contains the polymerase and the 3'-5' exonuclease proofreading activities. The polymerase is tethered to the template via the sliding clamp processivity factor. The clamp-loading complex assembles the beta processivity factor onto the primer template and plays a central role in the organization and communication at the replication fork. This complex contains delta, delta', psi and chi, and copies of either or both of two different DnaX proteins, gamma and tau. The composition of the holoenzyme is, therefore: (alpha,epsilon,theta)[2]-(gamma/tau)[3]-delta,delta', psi,chi-beta[4]. Mg(2+) is required as a cofactor. The cofactor is Mn(2+).

It carries out the reaction DNA(n) + a 2'-deoxyribonucleoside 5'-triphosphate = DNA(n+1) + diphosphate. DNA polymerase III is a complex, multichain enzyme responsible for most of the replicative synthesis in bacteria. The epsilon subunit contain the editing function and is a proofreading 3'-5' exonuclease. The sequence is that of DNA polymerase III subunit epsilon (dnaQ) from Buchnera aphidicola subsp. Baizongia pistaciae (strain Bp).